A 409-amino-acid chain; its full sequence is F-box/kelch-repeat protein At2g44130 (409 aa).

The F-box domain maps to 17-63 (HELIPGLPSELALECLVRVPFQFQSAMRSVCRSWRSLLSDSSFIQER). Kelch repeat units follow at residues 98 to 148 (KKSE…VLQD), 151 to 199 (KILL…SVSP), 201 to 248 (KVYV…AVGM), and 251 to 300 (RFCV…RTAG).

In Arabidopsis thaliana (Mouse-ear cress), this protein is F-box/kelch-repeat protein At2g44130.